The chain runs to 890 residues: Alanine--tRNA ligase (890 aa).

Residues His564, His568, Cys677, and His681 each coordinate Zn(2+).

It belongs to the class-II aminoacyl-tRNA synthetase family. Zn(2+) serves as cofactor.

Its subcellular location is the cytoplasm. The catalysed reaction is tRNA(Ala) + L-alanine + ATP = L-alanyl-tRNA(Ala) + AMP + diphosphate. In terms of biological role, catalyzes the attachment of alanine to tRNA(Ala) in a two-step reaction: alanine is first activated by ATP to form Ala-AMP and then transferred to the acceptor end of tRNA(Ala). Also edits incorrectly charged Ser-tRNA(Ala) and Gly-tRNA(Ala) via its editing domain. This Rhodopseudomonas palustris (strain BisB18) protein is Alanine--tRNA ligase.